Consider the following 358-residue polypeptide: Gentisate 1,2-dioxygenase (358 aa).

The region spanning 99–165 (QYLGPREVAP…VTDEPMAWLD (67 aa)) is the Cupin type-2 domain. The segment at 185-215 (DELSTRETPERSRGERLWGHPGLRPIGRPDQ) is disordered. Basic and acidic residues predominate over residues 187–202 (LSTRETPERSRGERLW).

Belongs to the gentisate 1,2-dioxygenase family.

It catalyses the reaction 2,5-dihydroxybenzoate + O2 = 3-maleylpyruvate + H(+). In terms of biological role, involved in the degradation of salicylate via a pathway involving coenzyme A derivative. Catalyzes the oxygen-dependent ring fission of gentisate between the carboxyl and proximal hydroxyl groups at positions 1 and 2 of the aromatic ring to form maleylpyruvate. The substrate specificity is strong, since salicylate, catechol, protocatechuic acid, homogenetisate, 2,3-dihydroxybenzoate or 5-aminosalicylate cannot substitute for gentisate in the ring cleavage reaction. The chain is Gentisate 1,2-dioxygenase from Streptomyces sp.